Consider the following 282-residue polypeptide: Casein kinase II subunit beta-2 (282 aa).

The tract at residues 1-92 is disordered; sequence MYRERGMVGS…ESEVSGSDGE (92 aa). Residues 13–28 are compositionally biased toward basic and acidic residues; the sequence is EVVDRKRINEIHDNRP. 2 stretches are compositionally biased toward polar residues: residues 29 to 47 and 61 to 71; these read SHSM…STSV and RSGSISKTNIS. Positions 75–92 are enriched in acidic residues; the sequence is DISDTDSEESEVSGSDGE.

It belongs to the casein kinase 2 subunit beta family. In terms of assembly, heterotetramer of two catalytic alpha subunits and two regulatory beta subunits. Interacts with CCA1. In terms of processing, phosphorylated by alpha subunit.

Its subcellular location is the cytoplasm. The protein resides in the cytosol. The protein localises to the nucleus. Plays a complex role in regulating the basal catalytic activity of the alpha subunit. The tetrameric holoenzyme CK2, composed of two alpha and two beta subunits, phosphorylates the transcription factor PIF1 after an exposure to light, resulting in a proteasome-dependent degradation of PIF1 and promotion of photomorphogenesis. CK2 phosphorylates translation initiation factors. May participate in the regulation of the initiation of translation. This chain is Casein kinase II subunit beta-2 (CKB2), found in Arabidopsis thaliana (Mouse-ear cress).